The primary structure comprises 288 residues: Aquaporin PIP 1-3 (288 aa).

Positions 1–30 are disordered; sequence MEGKEEDVRLGANRYTERQPIGTAAQGAEE. The next 2 helical transmembrane spans lie at 57 to 77 and 92 to 114; these read IAEFVATFLFLYISILTVMGV and IAWSFGGMIFALVYCTAGISGGH. Positions 116–118 match the NPA 1 motif; the sequence is NPA. Helical transmembrane passes span 135–155, 177–197, and 211–231; these read VFYMAMQCLGAICGAGVVKGF, GDGLGAEIVGTFVLVYTVFSA, and ILAPLPIGFAVFLVHLATIPI. The short motif at 237-239 is the NPA 2 element; the sequence is NPA. A helical membrane pass occupies residues 259–279; sequence IFWVGPFIGAALAAIYHVVVI.

This sequence belongs to the MIP/aquaporin (TC 1.A.8) family. PIP (TC 1.A.8.11) subfamily. In terms of tissue distribution, expressed in roots and leaves.

The protein localises to the cell membrane. Water channel required to facilitate the transport of water across cell membrane. Increases the capacity for root water uptake under water deficit. May play a role in drought avoidance in upland rice. The protein is Aquaporin PIP 1-3 (PIP1-3) of Oryza sativa subsp. japonica (Rice).